Reading from the N-terminus, the 2294-residue chain is Protein Ycf2 (2294 aa).

1635–1642 (GSIGTGRS) lines the ATP pocket.

The protein belongs to the Ycf2 family.

The protein localises to the plastid. The protein resides in the chloroplast stroma. Its function is as follows. Probable ATPase of unknown function. Its presence in a non-photosynthetic plant (Epifagus virginiana) and experiments in tobacco indicate that it has an essential function which is probably not related to photosynthesis. The protein is Protein Ycf2 of Ranunculus macranthus (Large buttercup).